A 213-amino-acid polypeptide reads, in one-letter code: Ribonuclease HII (213 aa).

The RNase H type-2 domain maps to 18–213 (GLHAGVDEVG…RPVKERLAKR (196 aa)). Residues D24, E25, and D116 each coordinate a divalent metal cation.

Belongs to the RNase HII family. It depends on Mn(2+) as a cofactor. Mg(2+) serves as cofactor.

The protein localises to the cytoplasm. The enzyme catalyses Endonucleolytic cleavage to 5'-phosphomonoester.. Functionally, endonuclease that specifically degrades the RNA of RNA-DNA hybrids. The sequence is that of Ribonuclease HII from Shewanella woodyi (strain ATCC 51908 / MS32).